A 389-amino-acid chain; its full sequence is Phospho-N-acetylmuramoyl-pentapeptide-transferase (389 aa).

Helical transmembrane passes span 25-45 (RAVM…PWVI), 73-93 (TMGG…WGDL), 97-117 (FIWI…VDDY), 135-155 (FWQS…VSEA), 190-210 (ISYP…IVGA), 222-242 (GLVI…AYVM), 258-278 (GAGE…AFLW), 286-306 (VFMG…VAVI), 311-331 (IVLF…MLQV), and 366-386 (QVVV…LSTL).

Belongs to the glycosyltransferase 4 family. MraY subfamily. Requires Mg(2+) as cofactor.

Its subcellular location is the cell inner membrane. The catalysed reaction is UDP-N-acetyl-alpha-D-muramoyl-L-alanyl-gamma-D-glutamyl-meso-2,6-diaminopimeloyl-D-alanyl-D-alanine + di-trans,octa-cis-undecaprenyl phosphate = di-trans,octa-cis-undecaprenyl diphospho-N-acetyl-alpha-D-muramoyl-L-alanyl-D-glutamyl-meso-2,6-diaminopimeloyl-D-alanyl-D-alanine + UMP. The protein operates within cell wall biogenesis; peptidoglycan biosynthesis. Functionally, catalyzes the initial step of the lipid cycle reactions in the biosynthesis of the cell wall peptidoglycan: transfers peptidoglycan precursor phospho-MurNAc-pentapeptide from UDP-MurNAc-pentapeptide onto the lipid carrier undecaprenyl phosphate, yielding undecaprenyl-pyrophosphoryl-MurNAc-pentapeptide, known as lipid I. The protein is Phospho-N-acetylmuramoyl-pentapeptide-transferase of Burkholderia mallei (strain NCTC 10247).